A 376-amino-acid polypeptide reads, in one-letter code: N-acetyldiaminopimelate deacetylase (376 aa).

Residue D69 is part of the active site. Residue E128 is the Proton acceptor of the active site.

It belongs to the peptidase M20A family. N-acetyldiaminopimelate deacetylase subfamily.

It catalyses the reaction N-acetyl-(2S,6S)-2,6-diaminopimelate + H2O = (2S,6S)-2,6-diaminopimelate + acetate. Its pathway is amino-acid biosynthesis; L-lysine biosynthesis via DAP pathway; LL-2,6-diaminopimelate from (S)-tetrahydrodipicolinate (acetylase route): step 3/3. In terms of biological role, catalyzes the conversion of N-acetyl-diaminopimelate to diaminopimelate and acetate. The polypeptide is N-acetyldiaminopimelate deacetylase (Streptococcus uberis (strain ATCC BAA-854 / 0140J)).